We begin with the raw amino-acid sequence, 292 residues long: Phosphatidylserine decarboxylase proenzyme (292 aa).

Residues aspartate 89, histidine 146, and serine 252 each act as charge relay system; for autoendoproteolytic cleavage activity in the active site. Serine 252 acts as the Schiff-base intermediate with substrate; via pyruvic acid; for decarboxylase activity in catalysis. Position 252 is a pyruvic acid (Ser); by autocatalysis (serine 252).

It belongs to the phosphatidylserine decarboxylase family. PSD-B subfamily. Prokaryotic type I sub-subfamily. As to quaternary structure, heterodimer of a large membrane-associated beta subunit and a small pyruvoyl-containing alpha subunit. Pyruvate is required as a cofactor. In terms of processing, is synthesized initially as an inactive proenzyme. Formation of the active enzyme involves a self-maturation process in which the active site pyruvoyl group is generated from an internal serine residue via an autocatalytic post-translational modification. Two non-identical subunits are generated from the proenzyme in this reaction, and the pyruvate is formed at the N-terminus of the alpha chain, which is derived from the carboxyl end of the proenzyme. The autoendoproteolytic cleavage occurs by a canonical serine protease mechanism, in which the side chain hydroxyl group of the serine supplies its oxygen atom to form the C-terminus of the beta chain, while the remainder of the serine residue undergoes an oxidative deamination to produce ammonia and the pyruvoyl prosthetic group on the alpha chain. During this reaction, the Ser that is part of the protease active site of the proenzyme becomes the pyruvoyl prosthetic group, which constitutes an essential element of the active site of the mature decarboxylase.

The protein localises to the cell membrane. The enzyme catalyses a 1,2-diacyl-sn-glycero-3-phospho-L-serine + H(+) = a 1,2-diacyl-sn-glycero-3-phosphoethanolamine + CO2. Its pathway is phospholipid metabolism; phosphatidylethanolamine biosynthesis; phosphatidylethanolamine from CDP-diacylglycerol: step 2/2. Catalyzes the formation of phosphatidylethanolamine (PtdEtn) from phosphatidylserine (PtdSer). This chain is Phosphatidylserine decarboxylase proenzyme, found in Shewanella sp. (strain ANA-3).